A 159-amino-acid chain; its full sequence is Phosphopantetheine adenylyltransferase (159 aa).

T9 serves as a coordination point for substrate. ATP is bound by residues 9 to 10 (TF) and H17. Substrate is bound by residues K41, L73, and R87. ATP contacts are provided by residues 88–90 (GLR), E98, and 123–129 (YSYISST).

The protein belongs to the bacterial CoaD family. In terms of assembly, homohexamer. The cofactor is Mg(2+).

Its subcellular location is the cytoplasm. It carries out the reaction (R)-4'-phosphopantetheine + ATP + H(+) = 3'-dephospho-CoA + diphosphate. The protein operates within cofactor biosynthesis; coenzyme A biosynthesis; CoA from (R)-pantothenate: step 4/5. Reversibly transfers an adenylyl group from ATP to 4'-phosphopantetheine, yielding dephospho-CoA (dPCoA) and pyrophosphate. This is Phosphopantetheine adenylyltransferase from Azotobacter vinelandii (strain DJ / ATCC BAA-1303).